The primary structure comprises 64 residues: Large ribosomal subunit protein bL35 (64 aa).

Residues 1–26 (MPKMKSHRGASKRFKRTASGKLKRSH) show a composition bias toward basic residues. The segment at 1-42 (MPKMKSHRGASKRFKRTASGKLKRSHAYTSHLFANKSTKAKR) is disordered.

Belongs to the bacterial ribosomal protein bL35 family.

The chain is Large ribosomal subunit protein bL35 from Exiguobacterium sp. (strain ATCC BAA-1283 / AT1b).